The chain runs to 177 residues: Nucleoside triphosphate/diphosphate phosphatase (177 aa).

Arg-23 serves as the catalytic Proton donor. The Mg(2+) site is built by Asn-87, Asp-103, Asp-105, Asp-107, Asp-120, and Glu-123.

Belongs to the Ntdp family. The cofactor is Mg(2+).

It catalyses the reaction a ribonucleoside 5'-triphosphate + H2O = a ribonucleoside 5'-diphosphate + phosphate + H(+). The enzyme catalyses a ribonucleoside 5'-diphosphate + H2O = a ribonucleoside 5'-phosphate + phosphate + H(+). Its function is as follows. Has nucleoside phosphatase activity towards nucleoside triphosphates and nucleoside diphosphates. This is Nucleoside triphosphate/diphosphate phosphatase from Streptococcus agalactiae serotype Ia (strain ATCC 27591 / A909 / CDC SS700).